The sequence spans 45 residues: Large ribosomal subunit protein bL34 (45 aa).

Belongs to the bacterial ribosomal protein bL34 family.

This is Large ribosomal subunit protein bL34 from Kineococcus radiotolerans (strain ATCC BAA-149 / DSM 14245 / SRS30216).